Here is a 239-residue protein sequence, read N- to C-terminus: Purine nucleoside phosphorylase DeoD-type (239 aa).

His-5 serves as a coordination point for a purine D-ribonucleoside. Residues Gly-21, Arg-25, Arg-44, and 89–92 (RVGS) each bind phosphate. A purine D-ribonucleoside contacts are provided by residues 180-182 (EME) and 204-205 (SD). Asp-205 acts as the Proton donor in catalysis.

The protein belongs to the PNP/UDP phosphorylase family. In terms of assembly, homohexamer; trimer of homodimers.

It carries out the reaction a purine D-ribonucleoside + phosphate = a purine nucleobase + alpha-D-ribose 1-phosphate. The enzyme catalyses a purine 2'-deoxy-D-ribonucleoside + phosphate = a purine nucleobase + 2-deoxy-alpha-D-ribose 1-phosphate. In terms of biological role, catalyzes the reversible phosphorolytic breakdown of the N-glycosidic bond in the beta-(deoxy)ribonucleoside molecules, with the formation of the corresponding free purine bases and pentose-1-phosphate. In Klebsiella pneumoniae, this protein is Purine nucleoside phosphorylase DeoD-type.